Reading from the N-terminus, the 444-residue chain is Methylenetetrahydrofolate--tRNA-(uracil-5-)-methyltransferase TrmFO (444 aa).

An FAD-binding site is contributed by 9 to 14 (GAGMAG).

The protein belongs to the MnmG family. TrmFO subfamily. The cofactor is FAD.

The protein localises to the cytoplasm. The enzyme catalyses uridine(54) in tRNA + (6R)-5,10-methylene-5,6,7,8-tetrahydrofolate + NADH + H(+) = 5-methyluridine(54) in tRNA + (6S)-5,6,7,8-tetrahydrofolate + NAD(+). The catalysed reaction is uridine(54) in tRNA + (6R)-5,10-methylene-5,6,7,8-tetrahydrofolate + NADPH + H(+) = 5-methyluridine(54) in tRNA + (6S)-5,6,7,8-tetrahydrofolate + NADP(+). Its function is as follows. Catalyzes the folate-dependent formation of 5-methyl-uridine at position 54 (M-5-U54) in all tRNAs. The chain is Methylenetetrahydrofolate--tRNA-(uracil-5-)-methyltransferase TrmFO from Cereibacter sphaeroides (strain ATCC 17029 / ATH 2.4.9) (Rhodobacter sphaeroides).